The primary structure comprises 481 residues: Proline--tRNA ligase (481 aa).

The protein belongs to the class-II aminoacyl-tRNA synthetase family. ProS type 3 subfamily. Homodimer.

Its subcellular location is the cytoplasm. It catalyses the reaction tRNA(Pro) + L-proline + ATP = L-prolyl-tRNA(Pro) + AMP + diphosphate. Functionally, catalyzes the attachment of proline to tRNA(Pro) in a two-step reaction: proline is first activated by ATP to form Pro-AMP and then transferred to the acceptor end of tRNA(Pro). In Chlorobium phaeobacteroides (strain DSM 266 / SMG 266 / 2430), this protein is Proline--tRNA ligase.